Reading from the N-terminus, the 286-residue chain is Acetylglutamate kinase (286 aa).

Substrate is bound by residues 70-71, Arg-92, and Asn-184; that span reads GG.

This sequence belongs to the acetylglutamate kinase family. ArgB subfamily.

Its subcellular location is the cytoplasm. It catalyses the reaction N-acetyl-L-glutamate + ATP = N-acetyl-L-glutamyl 5-phosphate + ADP. The protein operates within amino-acid biosynthesis; L-arginine biosynthesis; N(2)-acetyl-L-ornithine from L-glutamate: step 2/4. Functionally, catalyzes the ATP-dependent phosphorylation of N-acetyl-L-glutamate. The sequence is that of Acetylglutamate kinase from Ruegeria sp. (strain TM1040) (Silicibacter sp.).